The chain runs to 965 residues: Sarcosine oxidase subunit alpha (965 aa).

The NAD(+) site is built by A139, D158, E159, R160, T166, V205, A418, L423, and T425. T692 and E784 together coordinate (6R)-5,10-methylene-5,6,7,8-tetrahydrofolate.

Belongs to the GcvT family. As to quaternary structure, heterotetramer composed of subunits alpha (SoxA), beta (SoxB), gamma (SoxG) and delta (SoxD). The cofactor is NAD(+).

The protein resides in the cytoplasm. It catalyses the reaction sarcosine + (6S)-5,6,7,8-tetrahydrofolate + O2 = (6R)-5,10-methylene-5,6,7,8-tetrahydrofolate + glycine + H2O2. It carries out the reaction sarcosine + O2 + H2O = formaldehyde + glycine + H2O2. Inhibited by Zn(2+), Cu(2+), Cd(2+), Hg(2+), Ag(+), p-chloromercuribenzoate (p-CMB), iodoacetamide, N-ethylmaleimide, CN(-), o-phenanthroline and sodium lauryl sulfate. In the presence of tetrahydrofolate, catalyzes the oxidative demethylation of sarcosine to yield glycine, 5,10-methylenetetrahydrofolate and hydrogen peroxide. In the absence of tetrahydrofolate, catalyzes the oxidative demethylation of sarcosine to yield glycine, formaldehyde and hydrogen peroxide. Can also use N-methyl-L-alanine and N-ethyl-L-glycine. Is very specific for oxygen as an acceptor. The polypeptide is Sarcosine oxidase subunit alpha (Corynebacterium sp. (strain U-96)).